Reading from the N-terminus, the 1061-residue chain is Transcription termination factor 2 (1061 aa).

Disordered stretches follow at residues 1–163 (MSSE…TAEA) and 212–253 (ILSS…VKTS). Positions 32–46 (LSKSSRLSKSSRPSS) are enriched in low complexity. Phosphoserine is present on residues Ser-108 and Ser-110. The segment covering 138–152 (LSDDDSEIEYSDEVQ) has biased composition (acidic residues). Phosphoserine is present on residues Ser-214 and Ser-215. Thr-216 carries the phosphothreonine modification. Positions 237–253 (KSLSPRSSAGASVVKTS) are enriched in polar residues. The 201-residue stretch at 452–652 (WRERKLPRGG…YALLKFLRCS (201 aa)) folds into the Helicase ATP-binding domain. ATP is bound at residue 465 to 472 (DDMGLGKT). Residues 485 to 523 (GQEMSEGKDESSDSDSEDDKNKKRKSVTGWKSKGRKDTR) are disordered. Basic residues predominate over residues 506 to 522 (KKRKSVTGWKSKGRKDT). Residues 603–606 (DEAH) carry the DEAH box motif. The Helicase C-terminal domain maps to 891-1056 (KINMVIQILK…SSKLTIDDLK (166 aa)).

This sequence belongs to the SNF2/RAD54 helicase family.

Its subcellular location is the nucleus. In terms of biological role, dsDNA-dependent ATPase which acts as a transcription termination factor by coupling ATP hydrolysis with removal of RNA polymerase II from the DNA template. The polypeptide is Transcription termination factor 2 (lds) (Drosophila melanogaster (Fruit fly)).